A 459-amino-acid polypeptide reads, in one-letter code: Proton-coupled folate transporter (459 aa).

Methionine 1 is modified (N-acetylmethionine). Residues 1–25 are Cytoplasmic-facing; the sequence is MEGRANSPGEPRAWPTRSVLCRGCV. A helical transmembrane segment spans residues 26-44; the sequence is EPLVFLANFALVLQGPVTT. The Extracellular segment spans residues 45–82; that stretch reads QYLWHRFSADLGYNGTRHRDSCSNHSVDPIAQEVETLT. N-linked (GlcNAc...) asparagine glycosylation is found at asparagine 58 and asparagine 68. Cysteine 66 and cysteine 298 are disulfide-bonded. The helical transmembrane segment at 83 to 108 threads the bilayer; sequence SHWTLYMNVGGFLVGLFSSTLLGAWS. Over 109–112 the chain is Cytoplasmic; sequence DCVG. The helical transmembrane segment at 113–135 threads the bilayer; the sequence is RRPLLVLASLGLLLQTVLSIFVV. Over 136–140 the chain is Extracellular; it reads QLHLH. Residues 141–154 traverse the membrane as a helical segment; it reads IGYLVLGRILCALL. Over 155–177 the chain is Cytoplasmic; sequence GDFSGLLAASFASVADVSSSRTR. Residues aspartate 156 and glutamate 185 each contribute to the H(+) site. Residues 178-203 form a helical membrane-spanning segment; sequence TIRMALLEACIGVAGMLASFIGGFLL. The Extracellular portion of the chain corresponds to 204–208; the sequence is QEQVY. A helical transmembrane segment spans residues 209 to 227; the sequence is VNPFWLALAVLTVMTLYAA. At 228 to 266 the chain is on the cytoplasmic side; that stretch reads FCFGETVKERTPTRLFTLRHHRSVIQLYVTQAPEKSRKH. Residues 267 to 289 traverse the membrane as a helical segment; that stretch reads LALYSLAIFVMITVHLGAQDILT. Histidine 281 contacts H(+). At 290-302 the chain is on the extracellular side; that stretch reads LYELSAPLCWDSR. Residues 303–325 traverse the membrane as a helical segment; sequence LISYGSAAQQLPYLTSLLGLRLL. At 326–331 the chain is on the cytoplasmic side; the sequence is QYCLAD. A helical membrane pass occupies residues 332-351; that stretch reads TWVAEIGLVFNILGMMVFAF. The Extracellular segment spans residues 352–355; the sequence is ATIT. The helical transmembrane segment at 356–376 threads the bilayer; the sequence is PLMFTGYGLLFLSLVVTPIIR. At 377–388 the chain is on the cytoplasmic side; the sequence is AKLSRLVRQSEQ. A helical membrane pass occupies residues 389-414; the sequence is GALFSALACVNGLAMLMASGIFNSLY. At 415–422 the chain is on the extracellular side; the sequence is PATLNLMK. A helical transmembrane segment spans residues 423–441; sequence GFPFLLAAGLLFIPAILMG. Over 442 to 459 the chain is Cytoplasmic; the sequence is ILERDNHCPEFQEFSQSP. A Phosphoserine modification is found at serine 458.

The protein belongs to the major facilitator superfamily. SLC46A family. In terms of assembly, monomer. Expressed in retina and retinal pigment epithelium.

The protein localises to the cell membrane. The protein resides in the apical cell membrane. Its subcellular location is the basolateral cell membrane. It is found in the endosome membrane. It localises to the cytoplasm. The enzyme catalyses folate(in) + H(+)(in) = folate(out) + H(+)(out). It catalyses the reaction (6S)-5-methyl-5,6,7,8-tetrahydrofolate(in) + H(+)(in) = (6S)-5-methyl-5,6,7,8-tetrahydrofolate(out) + H(+)(out). It carries out the reaction methotrexate(in) + H(+)(in) = methotrexate(out) + H(+)(out). The catalysed reaction is pemetrexed(in) + H(+)(in) = pemetrexed(out) + H(+)(out). In terms of biological role, proton-coupled folate symporter that mediates folate absorption using an H(+) gradient as a driving force. Involved in the intestinal absorption of folates at the brush-border membrane of the proximal jejunum, and the transport from blood to cerebrospinal fluid across the choroid plexus. Functions at acidic pH via alternate outward- and inward-open conformation states. Protonation of residues in the outward open state primes the protein for transport. Binding of folate promotes breaking of salt bridge network and subsequent closure of the extracellular gate, leading to the inward-open state and release of protons and folate. Also able to transport antifolate drugs, such as methotrexate and pemetrexed. Involved in FOLR1-mediated endocytosis by serving as a route of export of folates from acidified endosomes. Also acts as a lower-affinity, pH-independent heme carrier protein and constitutes the main importer of heme in the intestine. Imports heme in the retina and retinal pigment epithelium, in neurons of the hippocampus, in hepatocytes and in the renal epithelial cells. Hence, participates in the trafficking of heme and increases intracellular iron content. The protein is Proton-coupled folate transporter of Bos taurus (Bovine).